Here is a 338-residue protein sequence, read N- to C-terminus: Stage V sporulation protein AD (338 aa).

The polypeptide is Stage V sporulation protein AD (spoVAD) (Bacillus subtilis (strain 168)).